Consider the following 419-residue polypeptide: Probable dual-specificity RNA methyltransferase RlmN (419 aa).

The interval 1-21 is disordered; that stretch reads MTAESDSPDGPVSAGTGRPVR. Glutamate 124 (proton acceptor) is an active-site residue. Residues 130–369 form the Radical SAM core domain; the sequence is YPDRATVCVS…ATTVRDTRGR (240 aa). An intrachain disulfide couples cysteine 137 to cysteine 375. Cysteine 144, cysteine 148, and cysteine 151 together coordinate [4Fe-4S] cluster. S-adenosyl-L-methionine contacts are provided by residues 199 to 200, serine 233, 256 to 258, and asparagine 332; these read GE and SLH. Cysteine 375 acts as the S-methylcysteine intermediate in catalysis. The interval 383-419 is disordered; that stretch reads AGRARRVESARPVESARPVGVAGAASGSPAHGSRVLR. Residues 397–419 show a composition bias toward low complexity; sequence SARPVGVAGAASGSPAHGSRVLR.

Belongs to the radical SAM superfamily. RlmN family. [4Fe-4S] cluster is required as a cofactor.

It is found in the cytoplasm. The catalysed reaction is adenosine(2503) in 23S rRNA + 2 reduced [2Fe-2S]-[ferredoxin] + 2 S-adenosyl-L-methionine = 2-methyladenosine(2503) in 23S rRNA + 5'-deoxyadenosine + L-methionine + 2 oxidized [2Fe-2S]-[ferredoxin] + S-adenosyl-L-homocysteine. The enzyme catalyses adenosine(37) in tRNA + 2 reduced [2Fe-2S]-[ferredoxin] + 2 S-adenosyl-L-methionine = 2-methyladenosine(37) in tRNA + 5'-deoxyadenosine + L-methionine + 2 oxidized [2Fe-2S]-[ferredoxin] + S-adenosyl-L-homocysteine. Specifically methylates position 2 of adenine 2503 in 23S rRNA and position 2 of adenine 37 in tRNAs. The polypeptide is Probable dual-specificity RNA methyltransferase RlmN (Frankia alni (strain DSM 45986 / CECT 9034 / ACN14a)).